A 212-amino-acid polypeptide reads, in one-letter code: Ribonuclease HII (212 aa).

The RNase H type-2 domain occupies 22–212 (ILIAGLDEAG…APLKGMIDGL (191 aa)). 3 residues coordinate a divalent metal cation: Asp28, Glu29, and Asp123.

This sequence belongs to the RNase HII family. Requires Mn(2+) as cofactor. Mg(2+) serves as cofactor.

It localises to the cytoplasm. It catalyses the reaction Endonucleolytic cleavage to 5'-phosphomonoester.. Endonuclease that specifically degrades the RNA of RNA-DNA hybrids. In Dehalococcoides mccartyi (strain ATCC BAA-2100 / JCM 16839 / KCTC 5957 / BAV1), this protein is Ribonuclease HII.